The sequence spans 693 residues: Elongation factor G (693 aa).

The region spanning 8–282 (EKTRNIGIMA…AVIDYLPSPL (275 aa)) is the tr-type G domain. GTP is bound by residues 17–24 (AHVDAGKT), 81–85 (DTPGH), and 135–138 (NKMD).

This sequence belongs to the TRAFAC class translation factor GTPase superfamily. Classic translation factor GTPase family. EF-G/EF-2 subfamily.

It is found in the cytoplasm. Functionally, catalyzes the GTP-dependent ribosomal translocation step during translation elongation. During this step, the ribosome changes from the pre-translocational (PRE) to the post-translocational (POST) state as the newly formed A-site-bound peptidyl-tRNA and P-site-bound deacylated tRNA move to the P and E sites, respectively. Catalyzes the coordinated movement of the two tRNA molecules, the mRNA and conformational changes in the ribosome. The sequence is that of Elongation factor G from Streptococcus pneumoniae serotype 2 (strain D39 / NCTC 7466).